The following is a 422-amino-acid chain: Vitamin D3 receptor (422 aa).

The nuclear receptor DNA-binding region spans 22 to 90; that stretch reads PRICGVCGDK…RLKRCVDIGM (69 aa). The Zn(2+) site is built by Cys-25, Cys-28, Cys-42, Cys-45, Cys-61, Cys-67, Cys-77, and Cys-80. 2 consecutive NR C4-type zinc fingers follow at residues 25-45 and 61-85; these read CGVC…CEGC and CPFN…LKRC. The segment at 98–127 is hinge; the sequence is DEEVQRKRQMINKRKSEEALKESMRPKISD. One can recognise an NR LBD domain in the interval 128–418; the sequence is EQQKMIDILL…LTPLMLEVFS (291 aa). The disordered stretch occupies residues 170–191; that stretch reads RSSSVHTQGSPSEDSDVFTSSP. Ser-232 is a calcitriol binding site. The segment at 241–259 is interaction with coactivator LXXLL motif; sequence KMIPGFRDLIAEDQIALLK. Calcitriol-binding residues include Arg-269, Ser-273, His-300, and His-392. The 9aaTAD signature appears at 411–419; the sequence is PLMLEVFSD.

It belongs to the nuclear hormone receptor family. NR1 subfamily. In terms of assembly, homodimer in the absence of bound vitamin D3. Heterodimer with RXRA after vitamin D3 binding. In terms of tissue distribution, detected in all tissues examined. Highest level in small intestine and skin.

It localises to the nucleus. The protein resides in the cytoplasm. Nuclear receptor for calcitriol, the active form of vitamin D3 which mediates the action of this vitamin on cells. Enters the nucleus upon vitamin D3 binding where it forms heterodimers with the retinoid X receptor/RXR. The VDR-RXR heterodimers bind to specific response elements on DNA and activate the transcription of vitamin D3-responsive target genes. Plays a central role in calcium homeostasis. Also functions as a receptor for the secondary bile acid lithocholic acid (LCA) and its metabolites. This chain is Vitamin D3 receptor (vdr), found in Xenopus laevis (African clawed frog).